The chain runs to 337 residues: Glutaminase-asparaginase (337 aa).

The 328-residue stretch at 10-337 folds into the Asparaginase/glutaminase domain; it reads ANVVILATGG…KELQRIFWEY (328 aa). Thr-20 (acyl-ester intermediate) is an active-site residue. Residues Ser-67 and 100-101 contribute to the substrate site; that span reads TD.

The protein belongs to the asparaginase 1 family. Homotetramer.

It is found in the periplasm. It carries out the reaction L-glutamine + H2O = L-glutamate + NH4(+). The enzyme catalyses L-asparagine + H2O = L-aspartate + NH4(+). The protein is Glutaminase-asparaginase (ansB) of Pseudomonas sp. (strain ATCC 29598 / 7A).